We begin with the raw amino-acid sequence, 675 residues long: Pesticidal crystal protein Cry10Aa (675 aa).

This sequence belongs to the delta endotoxin family.

In terms of biological role, promotes colloidosmotic lysis by binding to the midgut epithelial cells of mosquitos. Active on Aedes aegypti. The chain is Pesticidal crystal protein Cry10Aa (cry10Aa) from Bacillus thuringiensis subsp. israelensis.